A 97-amino-acid polypeptide reads, in one-letter code: Large ribosomal subunit protein eL21 (97 aa).

The interval Met1–Met24 is disordered. The span at Ser9–Gln21 shows a compositional bias: basic residues.

Belongs to the eukaryotic ribosomal protein eL21 family.

This is Large ribosomal subunit protein eL21 from Methanococcus maripaludis (strain DSM 14266 / JCM 13030 / NBRC 101832 / S2 / LL).